Reading from the N-terminus, the 241-residue chain is 1-(5-phosphoribosyl)-5-[(5-phosphoribosylamino)methylideneamino] imidazole-4-carboxamide isomerase (241 aa).

Aspartate 8 functions as the Proton acceptor in the catalytic mechanism. The active-site Proton donor is aspartate 130.

This sequence belongs to the HisA/HisF family.

Its subcellular location is the cytoplasm. The enzyme catalyses 1-(5-phospho-beta-D-ribosyl)-5-[(5-phospho-beta-D-ribosylamino)methylideneamino]imidazole-4-carboxamide = 5-[(5-phospho-1-deoxy-D-ribulos-1-ylimino)methylamino]-1-(5-phospho-beta-D-ribosyl)imidazole-4-carboxamide. Its pathway is amino-acid biosynthesis; L-histidine biosynthesis; L-histidine from 5-phospho-alpha-D-ribose 1-diphosphate: step 4/9. This chain is 1-(5-phosphoribosyl)-5-[(5-phosphoribosylamino)methylideneamino] imidazole-4-carboxamide isomerase, found in Leptospira interrogans serogroup Icterohaemorrhagiae serovar copenhageni (strain Fiocruz L1-130).